We begin with the raw amino-acid sequence, 695 residues long: ATP-dependent permease MDL1, mitochondrial (695 aa).

The transit peptide at 1–100 (MIVRMIRLCK…RLFVLSKPES (100 aa)) directs the protein to the mitochondrion. A run of 5 helical transmembrane segments spans residues 103–123 (IGLALLLILISSSVSMAVPSV), 156–176 (FTALGAVFIIGAVANASRIII), 242–262 (FVGFGMMSFLSWKLTCVMMIL), 337–357 (GLFFGSTGLVGNTAMLSLLLV), and 372–392 (LSSFMMYAVYTGSSLFGLSSF). An ABC transmembrane type-1 domain is found at 103-398 (IGLALLLILI…LSSFYSELMK (296 aa)). The 242-residue stretch at 432-673 (IVFKNVSFTY…PNSELNALLA (242 aa)) folds into the ABC transporter domain. 467-474 (GPSGSGKS) serves as a coordination point for ATP.

The protein belongs to the ABC transporter superfamily. ABCB family. Mitochondrial peptide exporter (TC 3.A.1.212) subfamily.

The protein resides in the mitochondrion inner membrane. Functionally, mediates export of peptides with molecular masses of 2100 to 600 daltons generated upon proteolysis of mitochondrial inner membrane proteins. The chain is ATP-dependent permease MDL1, mitochondrial (MDL1) from Saccharomyces cerevisiae (strain ATCC 204508 / S288c) (Baker's yeast).